Here is a 354-residue protein sequence, read N- to C-terminus: MTAKPLRTVLSLLFFALSGVLGTPEISCRNEYGEAVDWFIFYKLPKRTSKASEEAGLQYLYLDSTRQTWNKSLYLINSTRSALGRTLQHLYDTHNSTNDTAYLIYNDGVPGSVNYSRQYGHAKGLLVWNRTQGFWLIHSVPKFPPVHGYEYPTSGRRYGQTGICITFGYSQFEEIDFQLLVLQPNIYSCFIPSTFHWKLIYMPRMCANSSSLKIPVRYLAELHSAQGLNFVHFAKSSFYTDDIFTGWIAQKLKTHLLAQTWQKKKQELPSNCSLPYHVYNIKSIGVTSKSYFSSRQDHSKWCVSIKGSANRWTCIGDLNRSLHQALRGGGFICTKNHYIYQAFHKLYLRYGFCK.

Positions 1–22 (MTAKPLRTVLSLLFFALSGVLG) are cleaved as a signal peptide. 9 N-linked (GlcNAc...) asparagine glycosylation sites follow: asparagine 70, asparagine 77, asparagine 95, asparagine 98, asparagine 114, asparagine 129, asparagine 208, asparagine 271, and asparagine 319.

This sequence belongs to the DNase II family. As to expression, highly expressed in the eye lens. Detected in liver, but not in the other tissues tested.

The protein resides in the lysosome. The catalysed reaction is Endonucleolytic cleavage to nucleoside 3'-phosphates and 3'-phosphooligonucleotide end-products.. In terms of biological role, hydrolyzes DNA under acidic conditions. Does not require divalent cations for activity. Participates in the degradation of nuclear DNA during lens cell differentiation. This is Deoxyribonuclease-2-beta (Dnase2b) from Mus musculus (Mouse).